The sequence spans 700 residues: Polyribonucleotide nucleotidyltransferase (700 aa).

Residues Asp485 and Asp491 each contribute to the Mg(2+) site. Residues 552-611 (PRITVIKINPEKIRDVIGKGGAVIRALTEETGTTIELEDDGTVKIASSNGEATKEAIRRI) enclose the KH domain. Residues 621-689 (GRIYNGKVIR…RQGRVRLSIK (69 aa)) enclose the S1 motif domain.

Belongs to the polyribonucleotide nucleotidyltransferase family. Component of the RNA degradosome, which is a multiprotein complex involved in RNA processing and mRNA degradation. It depends on Mg(2+) as a cofactor.

The protein resides in the cytoplasm. The catalysed reaction is RNA(n+1) + phosphate = RNA(n) + a ribonucleoside 5'-diphosphate. Its function is as follows. Involved in mRNA degradation. Catalyzes the phosphorolysis of single-stranded polyribonucleotides processively in the 3'- to 5'-direction. This is Polyribonucleotide nucleotidyltransferase from Shewanella baltica (strain OS155 / ATCC BAA-1091).